The chain runs to 382 residues: Anhydro-N-acetylmuramic acid kinase (382 aa).

18–25 is an ATP binding site; that stretch reads GTSLDGVD.

It belongs to the anhydro-N-acetylmuramic acid kinase family.

It catalyses the reaction 1,6-anhydro-N-acetyl-beta-muramate + ATP + H2O = N-acetyl-D-muramate 6-phosphate + ADP + H(+). It functions in the pathway amino-sugar metabolism; 1,6-anhydro-N-acetylmuramate degradation. The protein operates within cell wall biogenesis; peptidoglycan recycling. Its function is as follows. Catalyzes the specific phosphorylation of 1,6-anhydro-N-acetylmuramic acid (anhMurNAc) with the simultaneous cleavage of the 1,6-anhydro ring, generating MurNAc-6-P. Is required for the utilization of anhMurNAc either imported from the medium or derived from its own cell wall murein, and thus plays a role in cell wall recycling. In Ralstonia nicotianae (strain ATCC BAA-1114 / GMI1000) (Ralstonia solanacearum), this protein is Anhydro-N-acetylmuramic acid kinase.